We begin with the raw amino-acid sequence, 687 residues long: Chloride channel protein ClC-Ka (687 aa).

4 helical membrane passes run 52–72 (FLMT…FAIG), 161–181 (LFLG…AYLG), 202–222 (VAAA…GVLF), and 236–256 (YWRG…LAVF). Positions 259, 261, 278, and 281 each coordinate Ca(2+). A run of 6 helical transmembrane segments spans residues 282 to 302 (IFFF…YLFC), 329 to 349 (ALAT…HFLA), 396 to 416 (FTIF…LILA), 417 to 437 (TTIP…AAIG), 452 to 472 (IVTG…AGAA), and 486 to 506 (LLAF…MAVL). The Cytoplasmic portion of the chain corresponds to 507–687 (AANAIAQSCQ…SNLTNPPAPK (181 aa)). CBS domains lie at 551–609 (MNHS…EPPS) and 626–684 (CPTE…TNPP).

It belongs to the chloride channel (TC 2.A.49) family. CLCNKA subfamily. In terms of assembly, homodimer. Interacts with BSND.

It localises to the basolateral cell membrane. The catalysed reaction is chloride(in) = chloride(out). It catalyses the reaction bromide(in) = bromide(out). The enzyme catalyses nitrate(in) = nitrate(out). It carries out the reaction iodide(out) = iodide(in). Its activity is regulated as follows. Activated by extracellular Ca(2+) and inhibited by extracellular acidic pH. In terms of biological role, anion-selective channel permeable to small monovalent anions with ion selectivity for chloride &gt; bromide &gt; nitrate &gt; iodide. Forms a homodimeric channel where each subunit has its own ion conduction pathway. May conduct double-barreled currents controlled by two types of gates, two fast gates that control each subunit independently and a slow common gate that opens and shuts off both subunits simultaneously. Assembles with the regulatory subunit BSND/Barttin for sorting at the basolateral plasma membrane domain and functional switch to the ion conducting state. CLCNKA:BSND channels display mostly a linear current-voltage relationship with fast gating at negative potentials. Mediates transepithelial chloride transport from the lumen to interstitial compartment along the thin ascending limb of Henle's loop, contributing to generation of hypertonic medullary interstitium as a countercurrent system to achieve urine concentration. Conducts chloride currents in the stria vascularis of the inner ear to establish the endocochlear potential necessary for normal hearing. The sequence is that of Chloride channel protein ClC-Ka from Homo sapiens (Human).